Reading from the N-terminus, the 563-residue chain is Dihydroxy-acid dehydratase (563 aa).

Cys50 serves as a coordination point for [2Fe-2S] cluster. Residue Asp82 coordinates Mg(2+). Cys123 lines the [2Fe-2S] cluster pocket. Mg(2+)-binding residues include Asp124 and Lys125. Residue Lys125 is modified to N6-carboxylysine. A [2Fe-2S] cluster-binding site is contributed by Cys195. Residue Glu447 participates in Mg(2+) binding. The active-site Proton acceptor is the Ser473.

The protein belongs to the IlvD/Edd family. In terms of assembly, homodimer. [2Fe-2S] cluster is required as a cofactor. It depends on Mg(2+) as a cofactor.

It carries out the reaction (2R)-2,3-dihydroxy-3-methylbutanoate = 3-methyl-2-oxobutanoate + H2O. It catalyses the reaction (2R,3R)-2,3-dihydroxy-3-methylpentanoate = (S)-3-methyl-2-oxopentanoate + H2O. It functions in the pathway amino-acid biosynthesis; L-isoleucine biosynthesis; L-isoleucine from 2-oxobutanoate: step 3/4. Its pathway is amino-acid biosynthesis; L-valine biosynthesis; L-valine from pyruvate: step 3/4. Its function is as follows. Functions in the biosynthesis of branched-chain amino acids. Catalyzes the dehydration of (2R,3R)-2,3-dihydroxy-3-methylpentanoate (2,3-dihydroxy-3-methylvalerate) into 2-oxo-3-methylpentanoate (2-oxo-3-methylvalerate) and of (2R)-2,3-dihydroxy-3-methylbutanoate (2,3-dihydroxyisovalerate) into 2-oxo-3-methylbutanoate (2-oxoisovalerate), the penultimate precursor to L-isoleucine and L-valine, respectively. This Nostoc sp. (strain PCC 7120 / SAG 25.82 / UTEX 2576) protein is Dihydroxy-acid dehydratase.